The primary structure comprises 425 residues: Glutamyl-tRNA reductase (425 aa).

Residues 49 to 52 (TCNR), S109, 114 to 116 (EGQ), and Q120 contribute to the substrate site. Catalysis depends on C50, which acts as the Nucleophile. 189-194 (GAGETG) is an NADP(+) binding site.

It belongs to the glutamyl-tRNA reductase family. In terms of assembly, homodimer.

It carries out the reaction (S)-4-amino-5-oxopentanoate + tRNA(Glu) + NADP(+) = L-glutamyl-tRNA(Glu) + NADPH + H(+). It functions in the pathway porphyrin-containing compound metabolism; protoporphyrin-IX biosynthesis; 5-aminolevulinate from L-glutamyl-tRNA(Glu): step 1/2. It participates in porphyrin-containing compound metabolism; chlorophyll biosynthesis. Catalyzes the NADPH-dependent reduction of glutamyl-tRNA(Glu) to glutamate 1-semialdehyde (GSA). The polypeptide is Glutamyl-tRNA reductase (Chlorobium phaeovibrioides (strain DSM 265 / 1930) (Prosthecochloris vibrioformis (strain DSM 265))).